The sequence spans 131 residues: Maturin (131 aa).

Residues Phe-107 to Glu-120 show a composition bias toward acidic residues. The interval Phe-107–Gln-131 is disordered.

The protein belongs to the MTURN family.

The protein localises to the cytoplasm. Its function is as follows. Involved in early neuronal development; required for cell cycle exit and differentiation of primary neurons. Cooperates synergistically with pak3 to promote primary neural differentiation within the neural plate. May play a role in promoting megakaryocyte differentiation. The polypeptide is Maturin (mturn) (Xenopus laevis (African clawed frog)).